Reading from the N-terminus, the 186-residue chain is Elongation factor P (186 aa).

It belongs to the elongation factor P family.

It localises to the cytoplasm. Its pathway is protein biosynthesis; polypeptide chain elongation. Functionally, involved in peptide bond synthesis. Stimulates efficient translation and peptide-bond synthesis on native or reconstituted 70S ribosomes in vitro. Probably functions indirectly by altering the affinity of the ribosome for aminoacyl-tRNA, thus increasing their reactivity as acceptors for peptidyl transferase. This Thiobacillus denitrificans (strain ATCC 25259 / T1) protein is Elongation factor P.